Reading from the N-terminus, the 101-residue chain is Urease subunit gamma (101 aa).

Belongs to the urease gamma subunit family. In terms of assembly, heterotrimer of UreA (gamma), UreB (beta) and UreC (alpha) subunits. Three heterotrimers associate to form the active enzyme.

The protein localises to the cytoplasm. It catalyses the reaction urea + 2 H2O + H(+) = hydrogencarbonate + 2 NH4(+). It functions in the pathway nitrogen metabolism; urea degradation; CO(2) and NH(3) from urea (urease route): step 1/1. This chain is Urease subunit gamma, found in Ureaplasma urealyticum serovar 10 (strain ATCC 33699 / Western).